The following is a 245-amino-acid chain: Putative transport permease YvfS (245 aa).

Helical transmembrane passes span 20–40 (YFVLWSLIMPIAFYYFFTNVV), 53–73 (HYLMSMTVFSVMGSSIMTLGI), 103–123 (IGQSVIHVLSITVIFLFGAII), 137–157 (GLWILFGALPFLALGTLIGLM), 164–184 (AGISNVLYMLLALGGGMWMPF), and 214–234 (GSPTWKNILILIAYMMLFMLL). One can recognise an ABC transmembrane type-2 domain in the interval 20–242 (YFVLWSLIMP…LLSKYIRRKQ (223 aa)).

It belongs to the ABC-2 integral membrane protein family.

It localises to the cell membrane. This Bacillus subtilis (strain 168) protein is Putative transport permease YvfS (yvfS).